A 145-amino-acid chain; its full sequence is MPKIKTSGVKYPDGWELIEPTLSELHSKMREAENDPHDGRRKCEALWPIFKINHQRSRYLYDLYYNRKEISQELYEFCLDQGHADRNLIAKWKKQGYERLCCLRCIQTRDHNFATTCVCRVPKHLREEQVIECVHCGCKGCASGD.

It belongs to the BUD31 (G10) family.

The protein resides in the nucleus. The sequence is that of Protein BUD31 homolog 3 from Oryza sativa subsp. japonica (Rice).